A 313-amino-acid polypeptide reads, in one-letter code: MAFHYPDHGLAMDPSSAAASSPNPSFSPGGGGGGGVGGGEREKAAVAAHPLYERLLEAHVACLRVATPVDQLPRIDAQIAARPPPLAAASAAAAAGGPSGGEELDLFMTHYVLLLCSFKEQLQQHVRVHAMEAVMGCWELEQSLQSLTGASPGEGTGATMSDDEDNQVDSEANMFDGNDGSDGMGFGPLMLTEGERSLVERVRHELKNELKQGYKEKLVDIREEILRKRRAGKLPGDTASILKAWWQAHSKWPYPTEDDKARLVQETGLQLKQINNWFINQRKRNWHSNPASSGEKTKKKRNVTGDGGAEQSW.

The disordered stretch occupies residues 13 to 40 (DPSSAAASSPNPSFSPGGGGGGGVGGGE). A compositionally biased stretch (low complexity) spans 14–27 (PSSAAASSPNPSFS). Residues 28–38 (PGGGGGGGVGG) show a composition bias toward gly residues. Positions 205–225 (ELKNELKQGYKEKLVDIREEI) constitute an ELK domain. The segment at residues 226 to 289 (LRKRRAGKLP…NQRKRNWHSN (64 aa)) is a DNA-binding region (homeobox; TALE-type). The disordered stretch occupies residues 282–313 (RKRNWHSNPASSGEKTKKKRNVTGDGGAEQSW).

The protein belongs to the TALE/KNOX homeobox family. Isoform 1 is expressed in roots, leaf blades, leaf sheaths and flowers. Isoform 2 is expressed in leaf blades, leaf sheaths and flowers.

Its subcellular location is the nucleus. The protein is Homeobox protein knotted-1-like 2 (HOS58) of Oryza sativa subsp. japonica (Rice).